The following is a 178-amino-acid chain: FXYD domain-containing ion transport regulator 5 (178 aa).

An N-terminal signal peptide occupies residues 1–21 (MSPPSQLCLLTIVALILPSEG). A disordered region spans residues 21–126 (GQTPEKPRSS…YMPPSYIENP (106 aa)). Residues 22-146 (QTPEKPRSSF…YDNTTLRKRG (125 aa)) lie on the Extracellular side of the membrane. Positions 29–58 (SSFTAHQSSVTTHVPVPDQTSPGVQTTPPI) are enriched in polar residues. Residues 70–79 (QTAAKTKTQQ) show a composition bias toward low complexity. A helical membrane pass occupies residues 147 to 164 (LLVAAVLFITGIIILTSG). Topologically, residues 165 to 178 (KCRQFSQLCLNRHR) are cytoplasmic.

Belongs to the FXYD family. As to quaternary structure, regulatory subunit of the sodium/potassium-transporting ATPase which is composed of a catalytic alpha subunit, a non-catalytic beta subunit and an additional regulatory subunit. The regulatory subunit, a member of the FXYD protein family, modulates the enzymatic activity in a tissue- and isoform-specific way by changing affinities of the Na+/K+-ATPase toward Na(+), K(+) or ATP. Post-translationally, glycosylated. Spleen, lung, skeletal muscle, and testis.

Its subcellular location is the cell membrane. The protein resides in the basolateral cell membrane. Functionally, associates with and regulates the activity of the sodium/potassium-transporting ATPase (NKA) which catalyzes the hydrolysis of ATP coupled with the exchange of Na(+) and K(+) ions across the plasma membrane. May increase NKA activity by increasing the apparent affinity for Na(+). Involved in down-regulation of E-cadherin which results in reduced cell adhesion. Promotes metastasis. The polypeptide is FXYD domain-containing ion transport regulator 5 (Fxyd5) (Rattus norvegicus (Rat)).